We begin with the raw amino-acid sequence, 218 residues long: Small ribosomal subunit protein uS3c (218 aa).

Residues 39–120 enclose the KH type-2 domain; that stretch reads IRNFMNKELL…IITCKVVGVT (82 aa).

It belongs to the universal ribosomal protein uS3 family. In terms of assembly, part of the 30S ribosomal subunit.

It is found in the plastid. The protein resides in the chloroplast. The chain is Small ribosomal subunit protein uS3c (rps3) from Euglena gracilis.